A 1370-amino-acid chain; its full sequence is DNA-directed RNA polymerase subunit beta (1370 aa).

It belongs to the RNA polymerase beta chain family. As to quaternary structure, the RNAP catalytic core consists of 2 alpha, 1 beta, 1 beta' and 1 omega subunit. When a sigma factor is associated with the core the holoenzyme is formed, which can initiate transcription.

It carries out the reaction RNA(n) + a ribonucleoside 5'-triphosphate = RNA(n+1) + diphosphate. Its function is as follows. DNA-dependent RNA polymerase catalyzes the transcription of DNA into RNA using the four ribonucleoside triphosphates as substrates. This Polaromonas naphthalenivorans (strain CJ2) protein is DNA-directed RNA polymerase subunit beta.